The chain runs to 296 residues: tRNA dimethylallyltransferase (296 aa).

11–18 (GPTAVGKT) contacts ATP. 13–18 (TAVGKT) contributes to the substrate binding site. Residues 36–39 (DSQQ) form an interaction with substrate tRNA region.

Belongs to the IPP transferase family. In terms of assembly, monomer. It depends on Mg(2+) as a cofactor.

The enzyme catalyses adenosine(37) in tRNA + dimethylallyl diphosphate = N(6)-dimethylallyladenosine(37) in tRNA + diphosphate. Catalyzes the transfer of a dimethylallyl group onto the adenine at position 37 in tRNAs that read codons beginning with uridine, leading to the formation of N6-(dimethylallyl)adenosine (i(6)A). The sequence is that of tRNA dimethylallyltransferase from Streptococcus agalactiae serotype Ia (strain ATCC 27591 / A909 / CDC SS700).